A 412-amino-acid chain; its full sequence is Lysosomal phospholipase A and acyltransferase (412 aa).

The N-terminal stretch at 1–33 (MDRHLCTCRETQLRSGLLLPLFLLMMLADLTLP) is a signal peptide. Residue Asp-46 coordinates substrate. Cys-65 and Cys-89 are oxidised to a cystine. Asn-99 carries an N-linked (GlcNAc...) asparagine glycan. The active-site Acyl-ester intermediate is Ser-198. Ser-198 is a Zn(2+) binding site. Met-199 contacts substrate. N-linked (GlcNAc...) asparagine glycans are attached at residues Asn-273 and Asn-289. Cys-355 contacts Zn(2+). Active-site charge relay system residues include Asp-360 and His-392. Zn(2+) is bound at residue His-392. A glycan (N-linked (GlcNAc...) asparagine) is linked at Asn-398.

This sequence belongs to the AB hydrolase superfamily. Lipase family. In terms of processing, N-glycosylated. N-glycosylation is important for maturation of the enzyme and normal subcellular location. In terms of tissue distribution, detected in blood plasma. Detected in alveolar macrophages (at protein level). Detected in heart, liver, spleen, kidney, thymus, brain and lung.

The protein localises to the secreted. It localises to the lysosome. The protein resides in the membrane. The catalysed reaction is a 1,2-diacyl-sn-glycero-3-phosphocholine + H2O = a 2-acyl-sn-glycero-3-phosphocholine + a fatty acid + H(+). It carries out the reaction 1-hexadecanoyl-2-(9Z-octadecenoyl)-sn-glycero-3-phosphocholine + H2O = 2-(9Z-octadecenoyl)-sn-glycero-3-phosphocholine + hexadecanoate + H(+). The enzyme catalyses 1,2-di-(9Z-octadecenoyl)-sn-glycero-3-phosphocholine + H2O = 2-(9Z-octadecenoyl)-sn-glycero-3-phosphocholine + (9Z)-octadecenoate + H(+). It catalyses the reaction 1-hexadecanoyl-2-glutaroyl-sn-glycero-3-phosphocholine + H2O = 2-glutaroyl-sn-glycero-3-phosphocholine + hexadecanoate + H(+). The catalysed reaction is 1-hexadecanoyl-2-nonadioyl-sn-glycero-3-phosphocholine + H2O = 2-nonadioyl-sn-glycero-3-phosphocholine + hexadecanoate + H(+). It carries out the reaction 1-hexadecanoyl-2-(5-oxopentanoyl)-sn-glycero-3-phosphocholine + H2O = 2-(5-oxopentanoyl)-sn-glycero-3-phosphocholine + hexadecanoate + H(+). The enzyme catalyses 1-hexadecanoyl-2-(9-oxononanoyl)-sn-glycero-3-phosphocholine + H2O = 2-(9-oxononanoyl)-sn-glycero-3-phosphocholine + hexadecanoate + H(+). It catalyses the reaction 1,2-dihexadecanoyl-sn-glycero-3-phosphocholine + H2O = 2-hexadecanoyl-sn-glycero-3-phosphocholine + hexadecanoate + H(+). The catalysed reaction is a 1,2-diacyl-sn-glycero-3-phosphocholine + H2O = a 1-acyl-sn-glycero-3-phosphocholine + a fatty acid + H(+). It carries out the reaction 1-hexadecanoyl-2-(9Z-octadecenoyl)-sn-glycero-3-phosphocholine + H2O = 1-hexadecanoyl-sn-glycero-3-phosphocholine + (9Z)-octadecenoate + H(+). The enzyme catalyses 1,2-di-(9Z-octadecenoyl)-sn-glycero-3-phosphocholine + H2O = 1-(9Z-octadecenoyl)-sn-glycero-3-phosphocholine + (9Z)-octadecenoate + H(+). It catalyses the reaction 1,2-dihexadecanoyl-sn-glycero-3-phosphocholine + H2O = 1-hexadecanoyl-sn-glycero-3-phosphocholine + hexadecanoate + H(+). The catalysed reaction is a 1-acyl-sn-glycero-3-phosphocholine + H2O = sn-glycerol 3-phosphocholine + a fatty acid + H(+). It carries out the reaction 1-hexadecanoyl-sn-glycero-3-phosphocholine + H2O = sn-glycerol 3-phosphocholine + hexadecanoate + H(+). The enzyme catalyses N-(acetyl)-sphing-4-enine + a 1,2-diacyl-sn-glycero-3-phosphoethanolamine = 1-O-acyl-N-(acetyl)-sphing-4-enine + a 2-acyl-sn-glycero-3-phosphoethanolamine. It catalyses the reaction 1-hexadecanoyl-2-(9Z-octadecenoyl)-sn-glycero-3-phosphoethanolamine + N-(acetyl)-sphing-4-enine = 2-(9Z-octadecenoyl)-sn-glycero-3-phosphoethanolamine + 1-hexadecanoyl-N-(acetyl)-sphing-4-enine. The catalysed reaction is 1-hexadecanoyl-2-(9Z,12Z-octadecadienoyl)-sn-glycero-3-phosphoethanolamine + N-(acetyl)-sphing-4-enine = 2-(9Z,12Z)-octadecadienoyl-sn-glycero-3-phosphoethanolamine + 1-hexadecanoyl-N-(acetyl)-sphing-4-enine. It carries out the reaction 1-hexadecanoyl-2-(5Z,8Z,11Z,14Z-eicosatetraenoyl)-sn-glycero-3-phosphoethanolamine + N-(acetyl)-sphing-4-enine = 2-(5Z,8Z,11Z,14Z)-eicosatetraenoyl-sn-glycero-3-phosphoethanolamine + 1-hexadecanoyl-N-(acetyl)-sphing-4-enine. The enzyme catalyses N-(acetyl)-sphing-4-enine + a 1,2-diacyl-sn-glycero-3-phosphoethanolamine = 1-O-acyl-N-(acetyl)-sphing-4-enine + a 1-acyl-sn-glycero-3-phosphoethanolamine. It catalyses the reaction 1-hexadecanoyl-2-(9Z-octadecenoyl)-sn-glycero-3-phosphoethanolamine + N-(acetyl)-sphing-4-enine = 1-(9Z-octadecenoyl)-N-(acetyl)-sphing-4-enine + 1-hexadecanoyl-sn-glycero-3-phosphoethanolamine. The catalysed reaction is 1-hexadecanoyl-2-(9Z,12Z-octadecadienoyl)-sn-glycero-3-phosphoethanolamine + N-(acetyl)-sphing-4-enine = 1-(9Z,12Z-octadecadienoyl)-N-acetylsphing-4-enine + 1-hexadecanoyl-sn-glycero-3-phosphoethanolamine. It carries out the reaction 1-hexadecanoyl-2-(5Z,8Z,11Z,14Z-eicosatetraenoyl)-sn-glycero-3-phosphoethanolamine + N-(acetyl)-sphing-4-enine = 1-(5Z,8Z,11Z,14Z)-eicosatetraenoyl-N-(acetyl)-sphing-4-enine + 1-hexadecanoyl-sn-glycero-3-phosphoethanolamine. The enzyme catalyses N-(acetyl)-sphing-4-enine + a 1,2-diacyl-sn-glycero-3-phosphocholine = 1-O-acyl-N-(acetyl)-sphing-4-enine + a 2-acyl-sn-glycero-3-phosphocholine. It catalyses the reaction 1-hexadecanoyl-2-(9Z-octadecenoyl)-sn-glycero-3-phosphocholine + N-(acetyl)-sphing-4-enine = 1-hexadecanoyl-N-(acetyl)-sphing-4-enine + 2-(9Z-octadecenoyl)-sn-glycero-3-phosphocholine. The catalysed reaction is 1-hexadecanoyl-2-(9Z,12Z-octadecadienoyl)-sn-glycero-3-phosphocholine + N-(acetyl)-sphing-4-enine = 2-(9Z,12Z-octadecadienoyl)-sn-glycero-3-phosphocholine + 1-hexadecanoyl-N-(acetyl)-sphing-4-enine. It carries out the reaction 1-hexadecanoyl-2-(5Z,8Z,11Z,14Z-eicosatetraenoyl)-sn-glycero-3-phosphocholine + N-(acetyl)-sphing-4-enine = 1-hexadecanoyl-N-(acetyl)-sphing-4-enine + 2-(5Z,8Z,11Z,14Z)-eicosatetraenoyl-sn-glycero-3-phosphocholine. The enzyme catalyses 1-hexadecanoyl-2-(4Z,7Z,10Z,13Z,16Z,19Z-docosahexaenoyl)-sn-glycero-3-phosphocholine + N-(acetyl)-sphing-4-enine = 2-(4Z,7Z,10Z,13Z,16Z,19Z-docosahexaenoyl)-sn-glycero-3-phosphocholine + 1-hexadecanoyl-N-(acetyl)-sphing-4-enine. It catalyses the reaction 1-hexadecanoyl-2-nonadioyl-sn-glycero-3-phosphocholine + N-(acetyl)-sphing-4-enine = 2-nonadioyl-sn-glycero-3-phosphocholine + 1-hexadecanoyl-N-(acetyl)-sphing-4-enine. The catalysed reaction is 1-octadecanoyl-2-(9Z-octadecenoyl)-sn-glycero-3-phosphocholine + N-(acetyl)-sphing-4-enine = 1-octadecanoyl-N-(acetyl)-sphing-4-enine + 2-(9Z-octadecenoyl)-sn-glycero-3-phosphocholine. It carries out the reaction 1-(9Z)-octadecenoyl-2-octadecanoyl-sn-glycero-3-phosphocholine + N-(acetyl)-sphing-4-enine = 2-octadecanoyl-sn-glycero-3-phosphocholine + 1-(9Z-octadecenoyl)-N-(acetyl)-sphing-4-enine. The enzyme catalyses 1-octadecanoyl-2-(5Z,8Z,11Z,14Z-eicosatetraenoyl)-sn-glycero-3-phosphocholine + N-(acetyl)-sphing-4-enine = 1-octadecanoyl-N-(acetyl)-sphing-4-enine + 2-(5Z,8Z,11Z,14Z)-eicosatetraenoyl-sn-glycero-3-phosphocholine. It catalyses the reaction 1-(9Z-octadecenoyl)-2-hexadecanoyl-sn-glycero-3-phosphocholine + N-(acetyl)-sphing-4-enine = 1-(9Z-octadecenoyl)-N-(acetyl)-sphing-4-enine + 2-hexadecanoyl-sn-glycero-3-phosphocholine. The catalysed reaction is N-(acetyl)-sphing-4-enine + a 1,2-diacyl-sn-glycero-3-phosphocholine = 1-O-acyl-N-(acetyl)-sphing-4-enine + a 1-acyl-sn-glycero-3-phosphocholine. It carries out the reaction 1-hexadecanoyl-2-(9Z-octadecenoyl)-sn-glycero-3-phosphocholine + N-(acetyl)-sphing-4-enine = 1-(9Z-octadecenoyl)-N-(acetyl)-sphing-4-enine + 1-hexadecanoyl-sn-glycero-3-phosphocholine. The enzyme catalyses 1-hexadecanoyl-2-(9Z,12Z-octadecadienoyl)-sn-glycero-3-phosphocholine + N-(acetyl)-sphing-4-enine = 1-(9Z,12Z-octadecadienoyl)-N-acetylsphing-4-enine + 1-hexadecanoyl-sn-glycero-3-phosphocholine. It catalyses the reaction 1-hexadecanoyl-2-(5Z,8Z,11Z,14Z-eicosatetraenoyl)-sn-glycero-3-phosphocholine + N-(acetyl)-sphing-4-enine = 1-(5Z,8Z,11Z,14Z)-eicosatetraenoyl-N-(acetyl)-sphing-4-enine + 1-hexadecanoyl-sn-glycero-3-phosphocholine. The catalysed reaction is 1-hexadecanoyl-2-(4Z,7Z,10Z,13Z,16Z,19Z-docosahexaenoyl)-sn-glycero-3-phosphocholine + N-(acetyl)-sphing-4-enine = 1-(4Z,7Z,10Z,13Z,16Z,19Z-docosahexaenoyl)-N-(acetyl)-sphing-4-enine + 1-hexadecanoyl-sn-glycero-3-phosphocholine. It carries out the reaction 1-octadecanoyl-2-(9Z-octadecenoyl)-sn-glycero-3-phosphocholine + N-(acetyl)-sphing-4-enine = 1-(9Z-octadecenoyl)-N-(acetyl)-sphing-4-enine + 1-octadecanoyl-sn-glycero-3-phosphocholine. The enzyme catalyses 1-octadecanoyl-2-(9Z,12Z)-octadecadienoyl-sn-glycero-3-phosphocholine + N-(acetyl)-sphing-4-enine = 1-(9Z,12Z-octadecadienoyl)-N-acetylsphing-4-enine + 1-octadecanoyl-sn-glycero-3-phosphocholine. It catalyses the reaction 1-(9Z-octadecenoyl)-2-hexadecanoyl-sn-glycero-3-phosphocholine + N-(acetyl)-sphing-4-enine = 1-hexadecanoyl-N-(acetyl)-sphing-4-enine + 1-(9Z-octadecenoyl)-sn-glycero-3-phosphocholine. The catalysed reaction is 1-(9Z)-octadecenoyl-2-octadecanoyl-sn-glycero-3-phosphocholine + N-(acetyl)-sphing-4-enine = 1-octadecanoyl-N-(acetyl)-sphing-4-enine + 1-(9Z-octadecenoyl)-sn-glycero-3-phosphocholine. It carries out the reaction 1,2-di-(9Z-octadecenoyl)-sn-glycero-3-phosphocholine + N-(acetyl)-sphing-4-enine = 1-(9Z-octadecenoyl)-N-(acetyl)-sphing-4-enine + 1-(9Z-octadecenoyl)-sn-glycero-3-phosphocholine. The enzyme catalyses 1-octadecanoyl-2-(5Z,8Z,11Z,14Z-eicosatetraenoyl)-sn-glycero-3-phosphocholine + N-(acetyl)-sphing-4-enine = 1-(5Z,8Z,11Z,14Z)-eicosatetraenoyl-N-(acetyl)-sphing-4-enine + 1-octadecanoyl-sn-glycero-3-phosphocholine. It catalyses the reaction a 1,2-diacyl-sn-glycero-3-phospho-L-serine + N-(acetyl)-sphing-4-enine = a 2-acyl-sn-glycero-3-phospho-L-serine + 1-O-acyl-N-(acetyl)-sphing-4-enine. The catalysed reaction is 1-octadecanoyl-2-(9Z-octadecenoyl)-sn-glycero-3-phospho-L-serine + N-(acetyl)-sphing-4-enine = 2-(9Z-octadecenoyl)-sn-glycero-3-phospho-L-serine + 1-octadecanoyl-N-(acetyl)-sphing-4-enine. It carries out the reaction a 1,2-diacyl-sn-glycero-3-phospho-L-serine + N-(acetyl)-sphing-4-enine = 1-O-acyl-N-(acetyl)-sphing-4-enine + a 1-acyl-sn-glycero-3-phospho-L-serine. The enzyme catalyses 1-octadecanoyl-2-(9Z-octadecenoyl)-sn-glycero-3-phospho-L-serine + N-(acetyl)-sphing-4-enine = 1-octadecanoyl-sn-glycero-3-phosphoserine + 1-(9Z-octadecenoyl)-N-(acetyl)-sphing-4-enine. It catalyses the reaction a 1,2-diacyl-sn-glycero-3-phospho-(1'-sn-glycerol) + N-(acetyl)-sphing-4-enine = 2-acyl-sn-glycero-3-phospho-(1'-sn-glycerol) + 1-O-acyl-N-(acetyl)-sphing-4-enine. The catalysed reaction is 1-octadecanoyl-2-(9Z-octadecenoyl)-sn-glycero-3-phospho-(1'-sn-glycerol) + N-(acetyl)-sphing-4-enine = 2-(9Z-octadecenoyl)-sn-glycero-3-phospho-(1'-sn-glycerol) + 1-octadecanoyl-N-(acetyl)-sphing-4-enine. It carries out the reaction a 1,2-diacyl-sn-glycero-3-phospho-(1'-sn-glycerol) + N-(acetyl)-sphing-4-enine = 1-O-acyl-N-(acetyl)-sphing-4-enine + 1-acyl-sn-glycero-3-phospho-(1'-sn-glycerol). The enzyme catalyses 1-octadecanoyl-2-(9Z-octadecenoyl)-sn-glycero-3-phospho-(1'-sn-glycerol) + N-(acetyl)-sphing-4-enine = 1-octadecanoyl-sn-glycero-3-phospho-(1'-sn-glycerol) + 1-(9Z-octadecenoyl)-N-(acetyl)-sphing-4-enine. It catalyses the reaction an N-acylethanolamine + a 1,2-diacyl-sn-glycero-3-phosphocholine = 2-(acylamino)ethyl fatty acid + a 2-acyl-sn-glycero-3-phosphocholine. The catalysed reaction is an N-acylethanolamine + a 1,2-diacyl-sn-glycero-3-phosphocholine = 2-(acylamino)ethyl fatty acid + a 1-acyl-sn-glycero-3-phosphocholine. It carries out the reaction N-(5Z,8Z,11Z,14Z-eicosatetraenoyl)-ethanolamine + 1,2-di-(9Z-octadecenoyl)-sn-glycero-3-phosphocholine = 2-[(5Z,8Z,11Z,14Z)-eicosatetraenoylamino]ethyl (9Z)-octadecenoate + (9Z-octadecenoyl)-sn-glycero-3-phosphocholine. The enzyme catalyses N-(9Z-octadecenoyl) ethanolamine + 1,2-di-(9Z-octadecenoyl)-sn-glycero-3-phosphocholine = 2-[(9Z)-octadecenoylamino]ethyl (9Z)-octadecenoate + (9Z-octadecenoyl)-sn-glycero-3-phosphocholine. It catalyses the reaction a 3-acyl-sn-glycerol + a 1,2-diacyl-sn-glycero-3-phosphocholine = a 1,3-diacylglycerol + a 1-acyl-sn-glycero-3-phosphocholine. The catalysed reaction is a 3-acyl-sn-glycerol + a 1,2-diacyl-sn-glycero-3-phosphocholine = a 1,3-diacylglycerol + a 2-acyl-sn-glycero-3-phosphocholine. It carries out the reaction 3-(9Z-octadecenoyl)-sn-glycerol + 1,2-di-(9Z-octadecenoyl)-sn-glycero-3-phosphocholine = 1,3-di-(9Z-octadecenoyl)-glycerol + (9Z-octadecenoyl)-sn-glycero-3-phosphocholine. The enzyme catalyses 3-hexadecanoyl-sn-glycerol + 1,2-di-(9Z-octadecenoyl)-sn-glycero-3-phosphocholine = 1-(9Z)-octadecenoyl-3-hexadecanoyl-sn-glycerol + (9Z-octadecenoyl)-sn-glycero-3-phosphocholine. It catalyses the reaction a 1-acyl-sn-glycerol + a 1,2-diacyl-sn-glycero-3-phosphocholine = a 1,3-diacylglycerol + a 2-acyl-sn-glycero-3-phosphocholine. The catalysed reaction is a 1-acyl-sn-glycerol + a 1,2-diacyl-sn-glycero-3-phosphocholine = a 1,3-diacylglycerol + a 1-acyl-sn-glycero-3-phosphocholine. It carries out the reaction 1-(9Z-octadecenoyl)-sn-glycerol + 1,2-di-(9Z-octadecenoyl)-sn-glycero-3-phosphocholine = 1,3-di-(9Z-octadecenoyl)-glycerol + (9Z-octadecenoyl)-sn-glycero-3-phosphocholine. The enzyme catalyses 1-hexadecanoyl-sn-glycerol + 1,2-di-(9Z-octadecenoyl)-sn-glycero-3-phosphocholine = 1-hexadecanoyl-3-(9Z)-octadecenoyl-sn-glycerol + (9Z-octadecenoyl)-sn-glycero-3-phosphocholine. It catalyses the reaction a 2-acylglycerol + a 1,2-diacyl-sn-glycero-3-phosphocholine = a 1,2-diacylglycerol + a 2-acyl-sn-glycero-3-phosphocholine. The catalysed reaction is a 2-acylglycerol + a 1,2-diacyl-sn-glycero-3-phosphocholine = a 1,2-diacylglycerol + a 1-acyl-sn-glycero-3-phosphocholine. It carries out the reaction 2-hexadecanoylglycerol + 1,2-di-(9Z-octadecenoyl)-sn-glycero-3-phosphocholine = 1-(9Z)-octadecenoyl-2-hexadecanoylglycerol + (9Z-octadecenoyl)-sn-glycero-3-phosphocholine. The enzyme catalyses 1-O-alkylglycerol + a 1,2-diacyl-sn-glycero-3-phosphocholine = 1-O-alkyl-3-acylglycerol + a 1-acyl-sn-glycero-3-phosphocholine. It catalyses the reaction 1-O-alkylglycerol + a 1,2-diacyl-sn-glycero-3-phosphocholine = 1-O-alkyl-3-acylglycerol + a 2-acyl-sn-glycero-3-phosphocholine. The catalysed reaction is 1-O-hexadecylglycerol + 1,2-di-(9Z-octadecenoyl)-sn-glycero-3-phosphocholine = 1-O-hexadecyl-3-(9Z)-octadecenoylglycerol + (9Z-octadecenoyl)-sn-glycero-3-phosphocholine. It carries out the reaction 1-O-alkyl-2-acyl-sn-glycerol + a 1,2-diacyl-sn-glycero-3-phosphocholine = 1-O-alkyl-2,3-diacyl-sn-glycerol + a 2-acyl-sn-glycero-3-phosphocholine. The enzyme catalyses 1-O-alkyl-2-acyl-sn-glycerol + a 1,2-diacyl-sn-glycero-3-phosphocholine = 1-O-alkyl-2,3-diacyl-sn-glycerol + a 1-acyl-sn-glycero-3-phosphocholine. It catalyses the reaction 1-O-hexadecyl-2-acetyl-sn-glycerol + 1,2-di-(9Z-octadecenoyl)-sn-glycero-3-phosphocholine = 1-O-hexadecyl-2-acetyl-3-(9Z)-octadecenoyl-sn-glycerol + (9Z-octadecenoyl)-sn-glycero-3-phosphocholine. The catalysed reaction is 1-O-hexadecyl-2-O-methyl-sn-glycerol + 1,2-di-(9Z-octadecenoyl)-sn-glycero-3-phosphocholine = 1-O-hexadecyl-2-O-methyl-3-(9Z)-octadecenoyl-sn-glycerol + (9Z-octadecenoyl)-sn-glycero-3-phosphocholine. It carries out the reaction a 1,2-diacyl-sn-glycero-3-phosphoethanolamine + H2O = a 1-acyl-sn-glycero-3-phosphoethanolamine + a fatty acid + H(+). The enzyme catalyses 1-acyl-2-(5Z,8Z,11Z,14Z)-eicosatetraenoyl-sn-glycero-3-phosphoethanolamine + H2O = a 1-acyl-sn-glycero-3-phosphoethanolamine + (5Z,8Z,11Z,14Z)-eicosatetraenoate + H(+). It catalyses the reaction a 1,2-diacyl-sn-glycero-3-phospho-(1'-sn-glycerol) + H2O = 1-acyl-sn-glycero-3-phospho-(1'-sn-glycerol) + a fatty acid + H(+). The catalysed reaction is 1-hexadecanoyl-2-(9Z-octadecenoyl)-sn-glycero-3-phospho-(1'-sn-glycerol) + H2O = 1-hexadecanoyl-sn-glycero-3-phospho-(1'-sn-glycerol) + (9Z)-octadecenoate + H(+). It carries out the reaction a 1,2-diacyl-sn-glycero-3-phospho-(1'-sn-glycerol) + H2O = 2-acyl-sn-glycero-3-phospho-(1'-sn-glycerol) + a fatty acid + H(+). The enzyme catalyses 1-hexadecanoyl-2-(9Z-octadecenoyl)-sn-glycero-3-phospho-(1'-sn-glycerol) + H2O = 2-(9Z-octadecenoyl)-sn-glycero-3-phospho-(1'-sn-glycerol) + hexadecanoate + H(+). Its activity is regulated as follows. Phospholipase sn-2 versus sn-1 positional specificity is affected by the phospholipid composition of membranes. Phospholipase A2 activity toward 1-hexadecanoyl-2-(5Z,8Z,11Z,14Z-eicosatetraenoyl)-sn-glycero-3-phosphocholine (PAPE) is enhanced in the presence of 1,2-dioleoyl-sn-glycero-3-phosphocholine (DOPC), which promotes lipid bilayer formation. O-acyltransferase activity is inhibited by antiarrhythmic drug amiodarone. Has dual calcium-independent phospholipase and O-acyltransferase activities with a potential role in glycerophospholipid homeostasis and remodeling of acyl groups of lipophilic alcohols present in acidic cellular compartments. Catalyzes hydrolysis of the ester bond of the fatty acyl group attached at sn-1 or sn-2 position of phospholipids (phospholipase A1 or A2 activity) and transfer it to the hydroxyl group at the first carbon of lipophilic alcohols (O-acyltransferase activity). Among preferred fatty acyl donors are phosphatidylcholines, phosphatidylethanolamines, phosphatidylglycerols and phosphatidylserines. Favors sn-2 over sn-1 deacylation of unsaturated fatty acyl groups of phosphatidylcholines, phosphatidylethanolamines, and phosphatidylglycerols. Among preferred fatty acyl acceptors are natural lipophilic alcohols including short-chain ceramide N-acetyl-sphingosine (C2 ceramide), alkylacylglycerols, monoacylglycerols, and acylethanolamides such as anandamide and oleoylethanolamide. Selectively hydrolyzes the sn-1 fatty acyl group of truncated oxidized phospholipids and may play a role in detoxification of reactive oxidized phospholipids during oxidative stress. Required for normal phospholipid degradation in alveolar macrophages with potential implications in the clearance of pulmonary surfactant, which is mainly composed of dipalmitoylphosphatidylcholine (1,2-dihexadecanoyl-sn-glycero-3-phosphocholine). Involved in the first step of bis(monoacylglycero)phosphate (BMP) de novo synthesis from phosphatidylglycerol (1,2-diacyl-sn-glycero-3-phospho-(1'-sn-glycerol), PG). BMP is an important player in cargo sorting and degradation, regulation of cellular cholesterol levels and intercellular communication. At neutral pH, hydrolyzes the sn-1 fatty acyl group of the lysophosphatidylcholines. The protein is Lysosomal phospholipase A and acyltransferase of Mus musculus (Mouse).